The chain runs to 833 residues: A disintegrin and metalloproteinase with thrombospondin motifs 4 (833 aa).

Positions 1 to 49 are cleaved as a signal peptide; the sequence is MSQMGLHPRRGLTGHWLQRFQPCLPLHTVQWRRLLLLAFLLSLAWPASP. Positions 50-208 are excised as a propeptide; that stretch reads LPREEEIVFP…PSPISRRTKR (159 aa). A glycan (N-linked (GlcNAc...) asparagine) is linked at Asn-63. Residues 180 to 204 form a disordered region; sequence KSPASSQGPMCTVKAPSGSPSPISR. The Cysteine switch motif lies at 188–195; it reads PMCTVKAP. Zn(2+) is bound at residue Cys-190. Residues 214–424 enclose the Peptidase M12B domain; sequence RFVETLVVAD…GYGHCLLDKP (211 aa). Cystine bridges form between Cys-289–Cys-341, Cys-318–Cys-323, Cys-335–Cys-419, Cys-373–Cys-403, Cys-445–Cys-468, Cys-456–Cys-478, Cys-463–Cys-497, Cys-491–Cys-502, Cys-528–Cys-565, Cys-532–Cys-570, and Cys-543–Cys-555. Asn-299 carries an N-linked (GlcNAc...) asparagine glycan. His-357 is a Zn(2+) binding site. Glu-358 is an active-site residue. Residues His-361 and His-367 each coordinate Zn(2+). Residues 433-515 enclose the Disintegrin domain; that stretch reads TFPGKDYDAD…DQLKDFNVPQ (83 aa). The region spanning 516-571 is the TSP type-1 domain; it reads AGGWGPWGPWGDCSRTCGGGVQFSSRDCTRPVPRNGGKYCEGRRTRFRSCNTENCP. The interval 682–833 is spacer; sequence SKQSGSFKKF…LRKRPWAGRK (152 aa).

Interacts with SRPX2. Requires Zn(2+) as cofactor. In terms of processing, the precursor is cleaved by a furin endopeptidase. Glycosylated. Can be O-fucosylated by POFUT2 on a serine or a threonine residue found within the consensus sequence C1-X(2)-(S/T)-C2-G of the TSP type-1 repeat domains where C1 and C2 are the first and second cysteine residue of the repeat, respectively. Fucosylated repeats can then be further glycosylated by the addition of a beta-1,3-glucose residue by the glucosyltransferase, B3GALTL. Fucosylation mediates the efficient secretion of ADAMTS family members. Can also be C-glycosylated with one or two mannose molecules on tryptophan residues within the consensus sequence W-X-X-W of the TPRs, and N-glycosylated. These other glycosylations can also facilitate secretion.

It is found in the secreted. The protein localises to the extracellular space. Its subcellular location is the extracellular matrix. It carries out the reaction Glutamyl endopeptidase. Bonds cleaved include 370-Thr-Glu-Gly-Glu-|-Ala-Arg-Gly-Ser-377 in the interglobular domain of mammalian aggrecan.. Its function is as follows. Cleaves aggrecan, a cartilage proteoglycan, at the '392-Glu-|-Ala-393' site and may be involved in its turnover. Also cleaves COMP. May play an important role in the destruction of aggrecan in arthritic diseases. In Mus musculus (Mouse), this protein is A disintegrin and metalloproteinase with thrombospondin motifs 4 (Adamts4).